The chain runs to 173 residues: uncharacterized protein (173 aa).

This is an uncharacterized protein from Mycobacterium tuberculosis (strain CDC 1551 / Oshkosh).